The sequence spans 382 residues: Hyaluronidase (382 aa).

The segment at residues 1–28 (MSRPLVITEGMMIGVLLMLAPINALLLG) is a signal peptide (or 24). Residues 29-33 (FVQST) constitute a propeptide that is removed on maturation. Cystine bridges form between C54/C345 and C221/C233. A glycan (N-linked (GlcNAc...) asparagine) is linked at N115. The active-site Proton donor is the E145. N263 carries N-linked (GlcNAc...) (complex) asparagine glycosylation.

It belongs to the glycosyl hydrolase 56 family. As to quaternary structure, homotetramer. Post-translationally, N-glycosylated. Glycans found include a majority of small oligosaccharides (Man1-3GlcNAc2), most of which are either alpha 1,3-monofucosylated or alpha 1,3-(alpha 1,6-)difucosylated at the innermost GlcNAc residue, approximately 5% of high-mannose type structures, and 8% contains the terminal trisaccharide GalNAc beta 1-4[Fuc alpha 1-3]GlcNAc beta 1-in beta 1,2-linkage to the core alpha 1,3-mannosyl residue. In terms of tissue distribution, expressed in the venom glands of worker bees. It is also detected in the testes of drones but not in the queen-bee venom glands or in pupae.

It is found in the secreted. The catalysed reaction is Random hydrolysis of (1-&gt;4)-linkages between N-acetyl-beta-D-glucosamine and D-glucuronate residues in hyaluronate.. Functionally, hydrolyzes high molecular weight hyaluronic acid to produce small oligosaccharides. The chain is Hyaluronidase from Apis mellifera (Honeybee).